Here is a 138-residue protein sequence, read N- to C-terminus: Acidic phospholipase A2 AplTX-I (138 aa).

Residues 1 to 16 (MRTLWIMAVLLLGVEG) form the signal peptide. 7 disulfide bridges follow: C42–C131, C44–C60, C59–C111, C65–C138, C66–C104, C73–C97, and C91–C102. Ca(2+) is bound by residues Y43, G45, and G47. The active site involves H63. D64 lines the Ca(2+) pocket. D105 is a catalytic residue.

In terms of assembly, monomer. Ca(2+) is required as a cofactor. As to expression, expressed by the venom gland.

Its subcellular location is the secreted. The enzyme catalyses a 1,2-diacyl-sn-glycero-3-phosphocholine + H2O = a 1-acyl-sn-glycero-3-phosphocholine + a fatty acid + H(+). With respect to regulation, inhibited by divalent cations different from calcium ions (cadmium, magnesium, manganese, zinc), since they act as competitive antagonists of this cofactor. In terms of biological role, snake venom phospholipase A2 (PLA2) that triggers a high neuromuscular toxicity in chick biventer cervicis preparations, but not in mouse phrenic nerve-diaphragm (PND) preparations, suggesting a selective neurotoxin activity towards birds. Does not induce myotoxic, coagulant, anticoagulant, edema, and antibacterial activities. PLA2 catalyzes the calcium-dependent hydrolysis of the 2-acyl groups in 3-sn-phosphoglycerides. The chain is Acidic phospholipase A2 AplTX-I from Agkistrodon piscivorus leucostoma (Western cottonmouth).